Here is a 408-residue protein sequence, read N- to C-terminus: GTPase Obg (408 aa).

The region spanning 1-159 is the Obg domain; sequence MKFVDEVSIR…RDLKMEMKVL (159 aa). A disordered region spans residues 127–148; that stretch reads NTRFKSSTNRAPRQTTPGKPGE. A compositionally biased stretch (polar residues) spans 129–143; the sequence is RFKSSTNRAPRQTTP. Residues 160–333 form the OBG-type G domain; that stretch reads ADVGLLGLPN…LSHDLMRYLE (174 aa). GTP is bound by residues 166-173, 191-195, 213-216, 283-286, and 314-316; these read GLPNAGKS, FTTLV, DIPG, NKAD, and SAI. Residues serine 173 and threonine 193 each contribute to the Mg(2+) site. Positions 385 to 401 are enriched in acidic residues; the sequence is GDDDGWDDDFEDDEDGP. Residues 385–408 form a disordered region; sequence GDDDGWDDDFEDDEDGPEIIYVRD.

Belongs to the TRAFAC class OBG-HflX-like GTPase superfamily. OBG GTPase family. In terms of assembly, monomer. Mg(2+) is required as a cofactor.

The protein localises to the cytoplasm. In terms of biological role, an essential GTPase which binds GTP, GDP and possibly (p)ppGpp with moderate affinity, with high nucleotide exchange rates and a fairly low GTP hydrolysis rate. Plays a role in control of the cell cycle, stress response, ribosome biogenesis and in those bacteria that undergo differentiation, in morphogenesis control. This chain is GTPase Obg, found in Pseudomonas putida (strain ATCC 700007 / DSM 6899 / JCM 31910 / BCRC 17059 / LMG 24140 / F1).